A 359-amino-acid polypeptide reads, in one-letter code: DNA integrity scanning protein DisA (359 aa).

Positions 7-145 (DPTGRAVLRA…DGRRWVLEDS (139 aa)) constitute a DAC domain. ATP is bound by residues Gly-74, Leu-92, and 105–109 (TRHRT).

The protein belongs to the DisA family. Homooctamer. The cofactor is Mg(2+).

It catalyses the reaction 2 ATP = 3',3'-c-di-AMP + 2 diphosphate. Participates in a DNA-damage check-point. DisA forms globular foci that rapidly scan along the chromosomes searching for lesions. Its function is as follows. Also has diadenylate cyclase activity, catalyzing the condensation of 2 ATP molecules into cyclic di-AMP (c-di-AMP). c-di-AMP likely acts as a signaling molecule that may couple DNA integrity with a cellular process. In Beutenbergia cavernae (strain ATCC BAA-8 / DSM 12333 / CCUG 43141 / JCM 11478 / NBRC 16432 / NCIMB 13614 / HKI 0122), this protein is DNA integrity scanning protein DisA.